The chain runs to 424 residues: Lipoamide acyltransferase component of branched-chain alpha-keto acid dehydrogenase complex (424 aa).

A Lipoyl-binding domain is found at 3–78 (IEQMTMPQLG…QVGEMICKIE (76 aa)). N6-lipoyllysine is present on Lys-44. A disordered region spans residues 82-115 (ANPAEQKQEQPAASEAAENPVAKSAGAADQPNKK). The 38-residue stretch at 116–153 (RYSPAVLRLAGEHGIDLDQVTGTGAGGRITRKDIQRLI) folds into the Peripheral subunit-binding (PSBD) domain. Positions 154 to 193 (ETGGVQEQNPEELKTAAPAPKSASKPEPKEETSYPASAAG) are disordered. Active-site residues include His-395 and Asp-399.

The protein belongs to the 2-oxoacid dehydrogenase family. In terms of assembly, forms a 24-polypeptide structural core with octahedral symmetry. Requires (R)-lipoate as cofactor.

It carries out the reaction N(6)-[(R)-dihydrolipoyl]-L-lysyl-[protein] + 2-methylpropanoyl-CoA = N(6)-[(R)-S(8)-2-methylpropanoyldihydrolipoyl]-L-lysyl-[protein] + CoA. Its function is as follows. The branched-chain alpha-keto dehydrogenase complex catalyzes the overall conversion of alpha-keto acids to acyl-CoA and CO(2). It contains multiple copies of three enzymatic components: branched-chain alpha-keto acid decarboxylase (E1), lipoamide acyltransferase (E2) and lipoamide dehydrogenase (E3). This chain is Lipoamide acyltransferase component of branched-chain alpha-keto acid dehydrogenase complex (bfmBB), found in Bacillus subtilis (strain 168).